We begin with the raw amino-acid sequence, 434 residues long: Aspartate--tRNA(Asp/Asn) ligase (434 aa).

Glu-167 is a binding site for L-aspartate. Residues 189-192 (QLFK) are aspartate. Residue Arg-211 coordinates L-aspartate. ATP is bound by residues 211–213 (RAE), 219–221 (RHL), and Glu-357. Mg(2+) contacts are provided by Glu-357 and Ser-360. L-aspartate contacts are provided by Ser-360 and Arg-364. 405–408 (GGER) contacts ATP.

This sequence belongs to the class-II aminoacyl-tRNA synthetase family. Type 2 subfamily. As to quaternary structure, homodimer. It depends on Mg(2+) as a cofactor.

Its subcellular location is the cytoplasm. The catalysed reaction is tRNA(Asx) + L-aspartate + ATP = L-aspartyl-tRNA(Asx) + AMP + diphosphate. Aspartyl-tRNA synthetase with relaxed tRNA specificity since it is able to aspartylate not only its cognate tRNA(Asp) but also tRNA(Asn). Reaction proceeds in two steps: L-aspartate is first activated by ATP to form Asp-AMP and then transferred to the acceptor end of tRNA(Asp/Asn). This is Aspartate--tRNA(Asp/Asn) ligase from Haloquadratum walsbyi (strain DSM 16790 / HBSQ001).